We begin with the raw amino-acid sequence, 519 residues long: Exodeoxyribonuclease 7 large subunit (519 aa).

The tract at residues 500–519 (VGRGKTRKPKEEPPAQGSLL) is disordered.

Belongs to the XseA family. As to quaternary structure, heterooligomer composed of large and small subunits.

The protein localises to the cytoplasm. The enzyme catalyses Exonucleolytic cleavage in either 5'- to 3'- or 3'- to 5'-direction to yield nucleoside 5'-phosphates.. Bidirectionally degrades single-stranded DNA into large acid-insoluble oligonucleotides, which are then degraded further into small acid-soluble oligonucleotides. This chain is Exodeoxyribonuclease 7 large subunit, found in Cereibacter sphaeroides (strain ATCC 17029 / ATH 2.4.9) (Rhodobacter sphaeroides).